Consider the following 373-residue polypeptide: GDSL esterase/lipase LIP-4 (373 aa).

A signal peptide spans 1–32; sequence MATLFLYSNTFSFFFITLVSLALLILRQPSRA. The active-site Nucleophile is the Ser-47. A glycan (N-linked (GlcNAc...) asparagine) is linked at Asn-93. Active-site residues include Asp-339 and His-342.

It belongs to the 'GDSL' lipolytic enzyme family.

It localises to the secreted. The chain is GDSL esterase/lipase LIP-4 (LIP4) from Arabidopsis thaliana (Mouse-ear cress).